A 345-amino-acid chain; its full sequence is Holliday junction branch migration complex subunit RuvB (345 aa).

Residues 4–194 are large ATPase domain (RuvB-L); the sequence is TDKLFGAAPE…FGIVARLEFY (191 aa). ATP-binding positions include leucine 33, arginine 34, glycine 75, lysine 78, threonine 79, threonine 80, 141–143, arginine 184, tyrosine 194, and arginine 231; that span reads EDY. Threonine 79 serves as a coordination point for Mg(2+). Residues 195–265 are small ATPAse domain (RuvB-S); that stretch reads NAEELTRIVS…VADAALAMLD (71 aa). The tract at residues 268 to 345 is head domain (RuvB-H); sequence PAGLDVMDRK…LHFGLPVKDA (78 aa). Residues arginine 323 and arginine 328 each contribute to the DNA site.

This sequence belongs to the RuvB family. In terms of assembly, homohexamer. Forms an RuvA(8)-RuvB(12)-Holliday junction (HJ) complex. HJ DNA is sandwiched between 2 RuvA tetramers; dsDNA enters through RuvA and exits via RuvB. An RuvB hexamer assembles on each DNA strand where it exits the tetramer. Each RuvB hexamer is contacted by two RuvA subunits (via domain III) on 2 adjacent RuvB subunits; this complex drives branch migration. In the full resolvosome a probable DNA-RuvA(4)-RuvB(12)-RuvC(2) complex forms which resolves the HJ.

It localises to the cytoplasm. The enzyme catalyses ATP + H2O = ADP + phosphate + H(+). In terms of biological role, the RuvA-RuvB-RuvC complex processes Holliday junction (HJ) DNA during genetic recombination and DNA repair, while the RuvA-RuvB complex plays an important role in the rescue of blocked DNA replication forks via replication fork reversal (RFR). RuvA specifically binds to HJ cruciform DNA, conferring on it an open structure. The RuvB hexamer acts as an ATP-dependent pump, pulling dsDNA into and through the RuvAB complex. RuvB forms 2 homohexamers on either side of HJ DNA bound by 1 or 2 RuvA tetramers; 4 subunits per hexamer contact DNA at a time. Coordinated motions by a converter formed by DNA-disengaged RuvB subunits stimulates ATP hydrolysis and nucleotide exchange. Immobilization of the converter enables RuvB to convert the ATP-contained energy into a lever motion, pulling 2 nucleotides of DNA out of the RuvA tetramer per ATP hydrolyzed, thus driving DNA branch migration. The RuvB motors rotate together with the DNA substrate, which together with the progressing nucleotide cycle form the mechanistic basis for DNA recombination by continuous HJ branch migration. Branch migration allows RuvC to scan DNA until it finds its consensus sequence, where it cleaves and resolves cruciform DNA. This chain is Holliday junction branch migration complex subunit RuvB, found in Chromobacterium violaceum (strain ATCC 12472 / DSM 30191 / JCM 1249 / CCUG 213 / NBRC 12614 / NCIMB 9131 / NCTC 9757 / MK).